Reading from the N-terminus, the 421-residue chain is Serine hydroxymethyltransferase (421 aa).

(6S)-5,6,7,8-tetrahydrofolate-binding positions include L121 and 125-127 (GHL). An N6-(pyridoxal phosphate)lysine modification is found at K229.

It belongs to the SHMT family. As to quaternary structure, homodimer. Pyridoxal 5'-phosphate is required as a cofactor.

Its subcellular location is the cytoplasm. The catalysed reaction is (6R)-5,10-methylene-5,6,7,8-tetrahydrofolate + glycine + H2O = (6S)-5,6,7,8-tetrahydrofolate + L-serine. It functions in the pathway one-carbon metabolism; tetrahydrofolate interconversion. Its pathway is amino-acid biosynthesis; glycine biosynthesis; glycine from L-serine: step 1/1. In terms of biological role, catalyzes the reversible interconversion of serine and glycine with tetrahydrofolate (THF) serving as the one-carbon carrier. This reaction serves as the major source of one-carbon groups required for the biosynthesis of purines, thymidylate, methionine, and other important biomolecules. Also exhibits THF-independent aldolase activity toward beta-hydroxyamino acids, producing glycine and aldehydes, via a retro-aldol mechanism. In Haemophilus influenzae (strain PittGG), this protein is Serine hydroxymethyltransferase.